Here is a 552-residue protein sequence, read N- to C-terminus: FERRY endosomal RAB5 effector complex subunit 3 (552 aa).

At S79 the chain carries Phosphoserine.

As to quaternary structure, component of the FERRY complex composed of five subunits, TBCK, PPP1R21, FERRY3, CRYZL1 and GATD1 with a ratio of 1:2:1:2:4, respectively.

It is found in the cytoplasm. The protein resides in the early endosome. Component of the FERRY complex (Five-subunit Endosomal Rab5 and RNA/ribosome intermediary). The FERRY complex directly interacts with mRNAs and RAB5A, and functions as a RAB5A effector involved in the localization and the distribution of specific mRNAs most likely by mediating their endosomal transport. The complex recruits mRNAs and ribosomes to early endosomes through direct mRNA-interaction. Plays a role in mast cell degranulation. This is FERRY endosomal RAB5 effector complex subunit 3 from Mus musculus (Mouse).